The following is a 170-amino-acid chain: Shikimate kinase (170 aa).

Position 11–16 (11–16 (LSGKST)) interacts with ATP. Ser15 lines the Mg(2+) pocket. 3 residues coordinate substrate: Asp33, Arg57, and Gly79. Arg119 provides a ligand contact to ATP. Position 137 (Arg137) interacts with substrate.

It belongs to the shikimate kinase family. Monomer. Requires Mg(2+) as cofactor.

Its subcellular location is the cytoplasm. It catalyses the reaction shikimate + ATP = 3-phosphoshikimate + ADP + H(+). Its pathway is metabolic intermediate biosynthesis; chorismate biosynthesis; chorismate from D-erythrose 4-phosphate and phosphoenolpyruvate: step 5/7. Functionally, catalyzes the specific phosphorylation of the 3-hydroxyl group of shikimic acid using ATP as a cosubstrate. The protein is Shikimate kinase of Clostridium botulinum (strain Kyoto / Type A2).